The following is a 661-amino-acid chain: UvrABC system protein B (661 aa).

The 158-residue stretch at 23–180 (EGLQKGYRIQ…THLARIGYER (158 aa)) folds into the Helicase ATP-binding domain. Residue 36–43 (GVTGSGKT) coordinates ATP. The Beta-hairpin motif lies at 89–112 (YYDYYQPEAYIPTRDLYIEKNADI). A Helicase C-terminal domain is found at 426–592 (QIDDLVNEIA…TIIKPLDEEI (167 aa)). Residues 620–655 (EEYIALLEEEMYKAASELRYEDAARLRDELFNIREK) enclose the UVR domain.

This sequence belongs to the UvrB family. As to quaternary structure, forms a heterotetramer with UvrA during the search for lesions. Interacts with UvrC in an incision complex.

It is found in the cytoplasm. Its function is as follows. The UvrABC repair system catalyzes the recognition and processing of DNA lesions. A damage recognition complex composed of 2 UvrA and 2 UvrB subunits scans DNA for abnormalities. Upon binding of the UvrA(2)B(2) complex to a putative damaged site, the DNA wraps around one UvrB monomer. DNA wrap is dependent on ATP binding by UvrB and probably causes local melting of the DNA helix, facilitating insertion of UvrB beta-hairpin between the DNA strands. Then UvrB probes one DNA strand for the presence of a lesion. If a lesion is found the UvrA subunits dissociate and the UvrB-DNA preincision complex is formed. This complex is subsequently bound by UvrC and the second UvrB is released. If no lesion is found, the DNA wraps around the other UvrB subunit that will check the other stand for damage. This Thermosipho africanus (strain TCF52B) protein is UvrABC system protein B.